The primary structure comprises 430 residues: Enolase (430 aa).

Glutamine 166 lines the (2R)-2-phosphoglycerate pocket. The active-site Proton donor is the glutamate 208. Residues aspartate 245, glutamate 288, and aspartate 315 each coordinate Mg(2+). Lysine 340, arginine 369, serine 370, and lysine 391 together coordinate (2R)-2-phosphoglycerate. The Proton acceptor role is filled by lysine 340.

The protein belongs to the enolase family. The cofactor is Mg(2+).

It localises to the cytoplasm. Its subcellular location is the secreted. It is found in the cell surface. It carries out the reaction (2R)-2-phosphoglycerate = phosphoenolpyruvate + H2O. It functions in the pathway carbohydrate degradation; glycolysis; pyruvate from D-glyceraldehyde 3-phosphate: step 4/5. Its function is as follows. Catalyzes the reversible conversion of 2-phosphoglycerate (2-PG) into phosphoenolpyruvate (PEP). It is essential for the degradation of carbohydrates via glycolysis. The sequence is that of Enolase from Clostridium kluyveri (strain NBRC 12016).